The following is a 201-amino-acid chain: Recombination protein RecR (201 aa).

A C4-type zinc finger spans residues 57–72 (CSDCRTFTEQDVCAIC). Positions 81-176 (GQICVVESPA…MASRIAHGVP (96 aa)) constitute a Toprim domain.

It belongs to the RecR family.

May play a role in DNA repair. It seems to be involved in an RecBC-independent recombinational process of DNA repair. It may act with RecF and RecO. The sequence is that of Recombination protein RecR from Pectobacterium carotovorum subsp. carotovorum (strain PC1).